The following is a 120-amino-acid chain: Large ribosomal subunit protein uL22 (120 aa).

A disordered region spans residues M1 to K20.

The protein belongs to the universal ribosomal protein uL22 family. In terms of assembly, part of the 50S ribosomal subunit.

In terms of biological role, this protein binds specifically to 23S rRNA; its binding is stimulated by other ribosomal proteins, e.g. L4, L17, and L20. It is important during the early stages of 50S assembly. It makes multiple contacts with different domains of the 23S rRNA in the assembled 50S subunit and ribosome. Functionally, the globular domain of the protein is located near the polypeptide exit tunnel on the outside of the subunit, while an extended beta-hairpin is found that lines the wall of the exit tunnel in the center of the 70S ribosome. This is Large ribosomal subunit protein uL22 from Borrelia turicatae (strain 91E135).